The chain runs to 556 residues: Formate--tetrahydrofolate ligase (556 aa).

65–72 (TPAGEGKT) contributes to the ATP binding site.

It belongs to the formate--tetrahydrofolate ligase family.

The enzyme catalyses (6S)-5,6,7,8-tetrahydrofolate + formate + ATP = (6R)-10-formyltetrahydrofolate + ADP + phosphate. It functions in the pathway one-carbon metabolism; tetrahydrofolate interconversion. The sequence is that of Formate--tetrahydrofolate ligase from Alkaliphilus oremlandii (strain OhILAs) (Clostridium oremlandii (strain OhILAs)).